The following is a 557-amino-acid chain: Polypyrimidine tract-binding protein 1 (557 aa).

An N-acetylmethionine modification is found at M1. S16 is subject to Phosphoserine. RRM domains follow at residues R59–N143, L184–L260, and S363–H437. A Glycyl lysine isopeptide (Lys-Gly) (interchain with G-Cter in SUMO2) cross-link involves residue K65. At Y127 the chain carries Phosphotyrosine. T138 carries the phosphothreonine modification. S141 carries the phosphoserine modification. Residue K218 forms a Glycyl lysine isopeptide (Lys-Gly) (interchain with G-Cter in SUMO2) linkage. The segment at H437–P460 is disordered. S459 is modified (phosphoserine). The 76-residue stretch at A480–S555 folds into the RRM 4 domain.

In terms of assembly, monomer. Part of a ternary complex containing KHSRP, PTBP1, PTBP2 and HNRPH1. Interacts with RAVER1 and SFPQ.

Its subcellular location is the nucleus. Plays a role in pre-mRNA splicing and in the regulation of alternative splicing events. Activates exon skipping of its own pre-mRNA during muscle cell differentiation. Binds to the polypyrimidine tract of introns. May promote RNA looping when bound to two separate polypyrimidine tracts in the same pre-mRNA. May promote the binding of U2 snRNP to pre-mRNA. Cooperates with RAVER1 to modulate switching between mutually exclusive exons during maturation of the TPM1 pre-mRNA. Represses the splicing of MAPT/Tau exon 10. Binds to polypyrimidine-rich controlling element (PCE) of CFTR and promotes exon skipping of CFTR exon 9, thereby antagonizing TIA1 and its role in exon inclusion of CFTR exon 9. Plays a role in the splicing of pyruvate kinase PKM by binding repressively to a polypyrimidine tract flanking PKM exon 9, inhibiting exon 9 inclusion and resulting in exon 10 inclusion and production of the PKM M2 isoform. The polypeptide is Polypyrimidine tract-binding protein 1 (PTBP1) (Bos taurus (Bovine)).